Here is a 407-residue protein sequence, read N- to C-terminus: Growth/differentiation factor 11 (407 aa).

Residues Met-1–Ala-24 form the signal peptide. The propeptide occupies Ala-25–Arg-298. N-linked (GlcNAc...) asparagine glycosylation occurs at Asn-94. 4 disulfides stabilise this stretch: Cys-304–Cys-314, Cys-313–Cys-372, Cys-341–Cys-404, and Cys-345–Cys-406.

This sequence belongs to the TGF-beta family. In terms of assembly, homodimer; disulfide-linked. Interacts directly with ACVR2B. Interacts directly with ACVR2A. Interacts with ACVR1B, TGFBR1 and ACVR1C in an ACVR2B-dependent manner. Interacts with FST isoform 2/FS-288. Synthesized as large precursor molecule that undergoes proteolytic cleavage by furin-like proteases. This produces an inactive form consisting of the mature C-terminal portion non-covalently bound to its cleaved N-terminal propeptide. Activation of the mature form requires additional cleavage of the propeptide by a tolloid-like metalloproteinase. As to expression, in the embryo, strong expression is seen in the palatal epithelia, including the medial edge epithelial and midline epithelial seam of the palatal shelves. Less pronounced expression is also seen throughout the palatal shelf and tongue mesenchyme.

Its subcellular location is the secreted. Functionally, secreted signal that acts globally to regulate anterior/posterior axial patterning during development. May play critical roles in patterning both mesodermal and neural tissues. It is required for proper vertebral patterning and orofacial development. Signals through activin receptors type-2, ACVR2A and ACVR2B, and activin receptors type-1, ACVR1B, ACVR1C and TGFBR1 leading to the phosphorylation of SMAD2 and SMAD3. This is Growth/differentiation factor 11 (GDF11) from Homo sapiens (Human).